The following is a 198-amino-acid chain: Thymidine kinase (198 aa).

Residues Ser-9–Ser-16 and Asp-87–Gln-90 each bind ATP. Glu-88 serves as the catalytic Proton acceptor. Residues Cys-145, Cys-147, Cys-182, and His-185 each coordinate Zn(2+).

This sequence belongs to the thymidine kinase family. Homotetramer.

The protein resides in the cytoplasm. It catalyses the reaction thymidine + ATP = dTMP + ADP + H(+). In Ruegeria pomeroyi (strain ATCC 700808 / DSM 15171 / DSS-3) (Silicibacter pomeroyi), this protein is Thymidine kinase.